The sequence spans 890 residues: Possible lysine-specific histone demethylase 1 (890 aa).

The segment covering M1–M13 has biased composition (polar residues). The tract at residues M1–V164 is disordered. Residues S24 and S27 each carry the phosphoserine modification. The span at N84–Q109 shows a compositional bias: polar residues. Residues A110–E122 are compositionally biased toward basic and acidic residues. Low complexity predominate over residues A123–S138. The SWIRM domain maps to Q160 to I259. Position 267–295 (V267–A295) interacts with FAD. A disordered region spans residues D860–Q890. The segment covering L861–N882 has biased composition (low complexity). A Phosphoserine modification is found at S866.

The protein belongs to the flavin monoamine oxidase family. Component of a complex that contains at least HDAC1/Rpd3, CoRest and Su(var)3-3/Hdm. The cofactor is FAD.

Its subcellular location is the nucleus. It localises to the chromosome. In terms of biological role, probable histone demethylase that specifically demethylates 'Lys-4' of histone H3, a specific tag for epigenetic transcriptional activation, thereby acting as a corepressor. Required for heterochromatic gene silencing. Acts by oxidizing the substrate by FAD to generate the corresponding imine that is subsequently hydrolyzed. Demethylates both mono- and tri-methylated 'Lys-4' of histone H3. May also demethylate 'Lys-9' of histone H3, Plays a role in the repression of neuronal genes. The chain is Possible lysine-specific histone demethylase 1 (Su(var)3-3) from Drosophila melanogaster (Fruit fly).